The primary structure comprises 680 residues: MVLHAQPPDQSTETAREAKALAGATDGATATSADLHAPMALSSSSPLRNPFPPIADYAFLSDWETTCLISPAGSVEWLCVPRPDSPSVFGAILDRSAGHFRLGPYGVSVPSARRYLPGSLIMETTWQTHTGWLIVRDALVMGKWHDIERRSRTHRRTPMDWDAEHILLRTVRCVSGTVELMMSCEPAFDYHRLGATWEYSAEAYGEAIARANTEPDAHPTLRLTTNLRIGLEGREARARTRMKEGDDVFVALSWTKHPPPQTYDEAADKMWQTTECWRQWINIGNFPDHPWRAYLQRSALTLKGLTYSPTGALLAASTTSLPETPRGERNWDYRYAWIRDSTFALWGLYTLGLDREADDFFAFIADVSGANNNERHPLQVMYGVGGERSLVEAELHHLSGYDHARPVRIGNGAYNQRQHDIWGSILDSFYLHAKSREQVPENLWPVLKRQVEEAIKHWREPDRGIWEVRGEPQHFTSSKVMCWVALDRGAKLAERQGEKSYAQQWRAIADEIKADILEHGVDSRGVFTQRYGDEALDASLLLVVLTRFLPPDDPRVRNTVLAIADELTEDGLVLRYRVHETDDGLSGEEGTFTICSFWLVSALVEIGEVGRAKRLCERLLSFASPLLLYAEEIEPRSGRHLGNFPQAFTHLALINAVVHVIRAEEEADSSGMFQPANAPM.

The disordered stretch occupies residues 1–27 (MVLHAQPPDQSTETAREAKALAGATDG).

This sequence belongs to the glycosyl hydrolase 15 family. As to quaternary structure, homomultimer. It depends on phosphate as a cofactor.

The catalysed reaction is alpha,alpha-trehalose + H2O = alpha-D-glucose + beta-D-glucose. It functions in the pathway glycan degradation; trehalose degradation; D-glucose from alpha,alpha-trehalose: step 1/1. Catalyzes the hydrolysis of alpha,alpha-trehalose into two molecules of D-glucose. The chain is Trehalase from Mycobacterium tuberculosis (strain ATCC 25618 / H37Rv).